A 265-amino-acid chain; its full sequence is WUSCHEL-related homeobox 3B (265 aa).

The homeobox; WUS-type DNA-binding region spans 4 to 68 (TPSTRWCPTP…NHKARERQRL (65 aa)). Disordered stretches follow at residues 77–107 (QQQYAQQQQQATAAAPASSPNSSATLLAPPA) and 242–265 (PTKSTGLKDECSSSKSSSCSTSTN). The segment covering 254 to 265 (SSKSSSCSTSTN) has biased composition (low complexity).

The protein belongs to the WUS homeobox family. Predominantly expressed in tissues enriched for shoot meristems and young lateral organ primordia. First expressed in lateral domains of shoot meristems. It is then expressed in the margins of young lateral organ primordia. Not expressed in roots, seedling leaves or fully expanded coleoptiles. Also expressed in vegetative shoot apices (five leaf primordia and the SAM) and in the male inflorescence. Expressed at high level in the female inflorescence.

The protein localises to the nucleus. Its function is as follows. Probable transcription factor required to initiate organ founder cells in a lateral domain of shoot meristems. Involved in leaf formation. The polypeptide is WUSCHEL-related homeobox 3B (WOX3B) (Zea mays (Maize)).